A 422-amino-acid polypeptide reads, in one-letter code: Transcription initiation factor TFIID subunit 15b (422 aa).

4 disordered regions span residues 1 to 24 (MAGMYNQDGGGGAPIPSYGGDGYG), 47 to 94 (YGGR…PNPS), 111 to 263 (ALAP…DAAT), and 368 to 422 (MAEK…SRPY). 2 stretches are compositionally biased toward gly residues: residues 8–24 (DGGGGAPIPSYGGDGYG) and 47–83 (YGGRGGYGGGGGRGNRGGGGGGYQGGDRGGRGSGGGG). The RanBP2-type zinc finger occupies 84–115 (RDGDWRCPNPSCGNVNFARRVECNKCGALAPS). Positions 123-133 (DRGGGGYSRGG) are enriched in gly residues. The span at 134–156 (GDSDRGGGRGGRNDSGRSYESSR) shows a compositional bias: basic and acidic residues. Composition is skewed to gly residues over residues 219 to 229 (PSYGGPRGGYG) and 236 to 247 (GGRGGRSGGYDG). The span at 252-263 (RRQEASYEDAAT) shows a compositional bias: basic and acidic residues. One can recognise an RRM domain in the interval 280-371 (ARIYISNLPP…NKISVTMAEK (92 aa)). A compositionally biased stretch (gly residues) spans 382 to 397 (RGGGRGGGGGGYGGGG).

It belongs to the TAF15 family. In terms of assembly, component of the TFIID complex. TFIID is composed of TATA binding protein (TBP) and a number of TBP-associated factors (TAFs) whose MWs range from 14-217 kDa. Interacts with TAF4, TAF4B, TAF5, TAF12B and TAF14. In terms of tissue distribution, expressed in roots, leaves and inflorescences.

The protein resides in the nucleus. Functionally, TAFs are components of the transcription factor IID (TFIID) complex that is essential for mediating regulation of RNA polymerase transcription. The protein is Transcription initiation factor TFIID subunit 15b (TAF15B) of Arabidopsis thaliana (Mouse-ear cress).